A 708-amino-acid chain; its full sequence is Nicastrin (708 aa).

The first 27 residues, 1–27 (MATTRGGSGPDPGSRGLLLLSFSVVLA), serve as a signal peptide directing secretion. At 28 to 668 (GLCGGNSVER…IFLIASKELE (641 aa)) the chain is on the lumenal side. N-linked (GlcNAc...) asparagine glycosylation is found at asparagine 44, asparagine 54, and asparagine 128. Cysteine 49 and cysteine 61 are joined by a disulfide. Cysteine 139 and cysteine 158 form a disulfide bridge. Asparagine 186 and asparagine 203 each carry an N-linked (GlcNAc...) asparagine glycan. Intrachain disulfides connect cysteine 194/cysteine 212 and cysteine 229/cysteine 247. N-linked (GlcNAc...) asparagine glycosylation is found at asparagine 263, asparagine 386, asparagine 434, asparagine 463, asparagine 505, asparagine 529, asparagine 561, asparagine 572, asparagine 579, asparagine 593, and asparagine 611. Cysteine 585 and cysteine 619 form a disulfide bridge. The chain crosses the membrane as a helical span at residues 669 to 689 (FITLIVGFSTLVFSLIVTYCI). The Cytoplasmic portion of the chain corresponds to 690-708 (NAKADVLFVAPREPGAVSY).

This sequence belongs to the nicastrin family. Component of the gamma-secretase complex. The functional gamma-secretase complex is composed of at least four polypeptides: a presenilin homodimer (PSEN1 or PSEN2), nicastrin (NCSTN), APH1 (APH1A or APH1B) and PEN2. Binds to proteolytic processed C-terminal fragments C83 and C99 of the amyloid precursor protein (APP). Interacts with PSEN1 and PSEN2. N-glycosylated.

It is found in the membrane. Its subcellular location is the cytoplasmic vesicle membrane. The protein localises to the melanosome. Functionally, essential subunit of the gamma-secretase complex, an endoprotease complex that catalyzes the intramembrane cleavage of integral membrane proteins such as Notch receptors and APP (amyloid-beta precursor protein). The gamma-secretase complex plays a role in Notch and Wnt signaling cascades and regulation of downstream processes via its role in processing key regulatory proteins, and by regulating cytosolic CTNNB1 levels. This Mus musculus (Mouse) protein is Nicastrin (Ncstn).